The chain runs to 497 residues: Interferon regulatory factor 5 (497 aa).

The short motif at 12–18 (PRRVRLK) is the Nuclear localization signal element. Positions 14-122 (RVRLKPWLVA…QPYKIYEVCS (109 aa)) form a DNA-binding region, IRF tryptophan pentad repeat. The tract at residues 124 to 178 (GPAPTESQPTDDYVLGEEEEEEEEELQRMLPGLSITEPALPGPPNAPYSLPKEDT) is disordered. Over residues 137 to 148 (VLGEEEEEEEEE) the composition is skewed to acidic residues. Residues 149 to 159 (LQRMLPGLSIT) carry the Nuclear export signal motif. Serine 157 bears the Phosphoserine; by TBK1 mark. The residue at position 300 (serine 300) is a Phosphoserine. Residues lysine 410 and lysine 411 each participate in a glycyl lysine isopeptide (Lys-Gly) (interchain with G-Cter in ubiquitin) cross-link. Position 430 is a phosphoserine (serine 430). The residue at position 434 (serine 434) is a Phosphoserine; by IKKB. Phosphoserine occurs at positions 436 and 439. Serine 445 bears the Phosphoserine; by IKKB mark.

This sequence belongs to the IRF family. In terms of assembly, homodimer, when phosphorylated. Interacts with TASL (via pLxIS motif); interaction takes place downstream of TLR7, TLR8 or TLR9, leading to its activation. Interacts with MYD88 and TRAF6. Post-translationally, phosphorylation of serine and threonine residues by IKBKB in a C-terminal autoinhibitory region, stimulates dimerization, transport into the nucleus, assembly with the coactivator CBP/EP300 and initiation of transcription. 'Lys-63'-linked polyubiquitination by TRAF6 is required for activation.

The protein resides in the cytoplasm. Its subcellular location is the nucleus. Its activity is regulated as follows. Maintained as a monomer in an autoinhibited state. Phosphorylation and activation follow the following steps: innate adapter protein TASL recruits IRF5, thereby licensing IRF5 for phosphorylation by IKBKB. Phosphorylated IRF5 dissociates from the adapter proteins, dimerizes, and then enters the nucleus to induce IFNs. Functionally, transcription factor that plays a critical role in innate immunity by activating expression of type I interferon (IFN) IFNA and INFB and inflammatory cytokines downstream of endolysosomal toll-like receptors TLR7, TLR8 and TLR9. Regulates the transcription of type I IFN genes (IFN-alpha and IFN-beta) and IFN-stimulated genes (ISG) by binding to an interferon-stimulated response element (ISRE) in their promoters. Can efficiently activate both the IFN-beta (IFNB) and the IFN-alpha (IFNA) genes and mediate their induction downstream of the TLR-activated, MyD88-dependent pathway. The sequence is that of Interferon regulatory factor 5 from Mus musculus (Mouse).